The chain runs to 312 residues: tRNA pseudouridine synthase B (312 aa).

The active-site Nucleophile is the Asp47.

Belongs to the pseudouridine synthase TruB family. Type 1 subfamily.

It catalyses the reaction uridine(55) in tRNA = pseudouridine(55) in tRNA. In terms of biological role, responsible for synthesis of pseudouridine from uracil-55 in the psi GC loop of transfer RNAs. The chain is tRNA pseudouridine synthase B from Vibrio cholerae serotype O1 (strain M66-2).